A 696-amino-acid chain; its full sequence is DNA-directed RNA polymerase subunit beta' (696 aa).

4 residues coordinate Zn(2+): C70, C72, C85, and C88. D540, D542, and D544 together coordinate Mg(2+).

Belongs to the RNA polymerase beta' chain family. RpoC1 subfamily. In terms of assembly, in plastids the minimal PEP RNA polymerase catalytic core is composed of four subunits: alpha, beta, beta', and beta''. When a (nuclear-encoded) sigma factor is associated with the core the holoenzyme is formed, which can initiate transcription. Mg(2+) is required as a cofactor. It depends on Zn(2+) as a cofactor.

It localises to the plastid. The protein localises to the chloroplast. The catalysed reaction is RNA(n) + a ribonucleoside 5'-triphosphate = RNA(n+1) + diphosphate. Functionally, DNA-dependent RNA polymerase catalyzes the transcription of DNA into RNA using the four ribonucleoside triphosphates as substrates. The chain is DNA-directed RNA polymerase subunit beta' from Phaeodactylum tricornutum (strain CCAP 1055/1).